The chain runs to 55 residues: UPF0391 membrane protein NE1120 (55 aa).

2 consecutive transmembrane segments (helical) span residues 4–24 and 27–47; these read MALV…AGIA and LAWA…VFYL.

This sequence belongs to the UPF0391 family.

The protein resides in the cell membrane. In Nitrosomonas europaea (strain ATCC 19718 / CIP 103999 / KCTC 2705 / NBRC 14298), this protein is UPF0391 membrane protein NE1120.